A 91-amino-acid polypeptide reads, in one-letter code: Large ribosomal subunit protein uL29 (91 aa).

Positions 67-91 are disordered; it reads AAPLAESSAPAKTKSRARKSKKEAL. The span at 79 to 91 shows a compositional bias: basic residues; sequence TKSRARKSKKEAL.

The protein belongs to the universal ribosomal protein uL29 family.

The protein is Large ribosomal subunit protein uL29 of Acidobacterium capsulatum (strain ATCC 51196 / DSM 11244 / BCRC 80197 / JCM 7670 / NBRC 15755 / NCIMB 13165 / 161).